An 898-amino-acid chain; its full sequence is MDHKAWPWKKKSMEKTVVESNGEVVADKIELEHRVKSLNDKLNSVEAESNKHETEAQEAIVGWEKTKAEVASLKKKLDEALNEKHRSEERSSHTDAGLKECVQQLRFVREEQERRMHDALTKASQEYERRLIVIKTELAGSGKRLAEAEGENAQLSKALLAKNKTVEDLNRERDRIEVDFNSLVSSLESKEKENVSLRYEVRVLEKELELRNEEREFSRRTAEASHKLHLENVKKVAKLESECQRLRVLVRKRLPGPAALSKMSNEVEMLGRRRVNGSPHSPMIDSEKINNLTEQLCLLEEENKTLREALNKKVSELQFSRNMYSRTASRLLEFESHLEESSRGTNIEPSRSSNVSHEVSLASVTEFDNDDKVSCADSWASALLSELDNFKNKKEMGTSLVGTPKAAEMKLMDDFAEMEKLAMVASTIDNRPGSSPICSSDSISATGPVENESNENSSEATKTSGTVYSLNPDASPKDDIKSDSLPQSLHIVLKAVMEHKHITQRNTDEVLEDIRKALSSVNHSSFSTNHQETKTLTVEDRLDMECNISKSIHRIIDVIEGVSLKDERHVSNRESERLSGYTARVLQWKTTELSSVLQRFLQACYDLLDRKADMKKFAQELSSVLEWMVNHCFSLQDVSTMRDEIKKQFEWDESRSGSEVDIGIFRQVSEAEKLRTEDVSFLACKDQLIEDKPGNQNLSRKTVEEEANDKTASASENELKLEEKQNMRTELEIAAASEKLAECQETILNLGKQLKALTNSKETALLSETLMYDVTDKSNNLPDAQPSHETTKPEKRLTSQRSSLLDQMKAEDHNTGESKDQKPQAADKNGKGGNSSVYNETIEALEQILLSDKSKGSDSNCFAIVPQKKTGGVKSLWRKLLGRNKKGKSKKVPNPFAN.

Coiled coils occupy residues 23-224 (EVVA…TAEA) and 287-320 (EKIN…LQFS). 3 disordered regions span residues 429 to 482 (DNRP…DIKS), 693 to 723 (PGNQ…KLEE), and 777 to 835 (KSNN…GGNS). The span at 434 to 459 (SSPICSSDSISATGPVENESNENSSE) shows a compositional bias: low complexity. Residues 460–469 (ATKTSGTVYS) show a composition bias toward polar residues. Residues 703–764 (VEEEANDKTA…KALTNSKETA (62 aa)) adopt a coiled-coil conformation. Residues 808 to 822 (MKAEDHNTGESKDQK) are compositionally biased toward basic and acidic residues.

Belongs to the FPP family. As to quaternary structure, interacts with WPP/MAF proteins.

This chain is Filament-like plant protein 7 (FPP7), found in Arabidopsis thaliana (Mouse-ear cress).